The sequence spans 599 residues: MGNTCVGPSISKNGFFQSVSTVLWKARQDGDDALPGANGAPDGGGQGRLPAPPPPTSDAPLAVQNKPPEHVKIVSTTDTASAEQDASKSSAGSDSGEAARPRPRVPPVKRVSSAGLLVGSVLKRKTESLKDKYSLGRKLGQGQFGTTYLCVERATGKEFACKSILKRKLVTDDDVEDVRREIQIMYHLAGHPNVISIRGAYEDAVAVHLVMELCAGGELFDRIVQKGHYTERKAAELARVIVGVVEVCHSMGVMHRDLKPENFLFADQTEEAALKTIDFGLSIFFRPGQVFTDVVGSPYYVAPEVLKKKYGQEADVWSAGVIIYILLCGVPPFWAENEQGIFEEVLHGRLDFQSEPWPSISEGAKDLVRRMLVRDPKKRLTAHEVLRHPWVQVGGLAPDKPLDSAVLSRMKQFSAMNKLKKMALRVIAENLSEDEIAGLKEMFKMIDTDNSGQITFEELKVGLKKVGANLQESEIYALMQAADVDNSGTIDYGEFIAATLHMNKIEREDHLFAAFQYFDKDGSGYITADELQLACEEFGLGDVQLEEMIREVDEDNDGRIDYNEFVAMMQKPTMGLPAKKSGGLQNSFSIGFREALRMS.

Glycine 2 is lipidated: N-myristoyl glycine. The interval 27 to 110 (RQDGDDALPG…PRPRVPPVKR (84 aa)) is disordered. A compositionally biased stretch (polar residues) spans 74–84 (VSTTDTASAEQ). A compositionally biased stretch (low complexity) spans 87–98 (SKSSAGSDSGEA). Residues 133–391 (YSLGRKLGQG…AHEVLRHPWV (259 aa)) form the Protein kinase domain. Residues 139-147 (LGQGQFGTT) and lysine 162 contribute to the ATP site. Catalysis depends on aspartate 257, which acts as the Proton acceptor. Residues 397–427 (APDKPLDSAVLSRMKQFSAMNKLKKMALRVI) are autoinhibitory domain. 4 EF-hand domains span residues 434–469 (DEIAGLKEMFKMIDTDNSGQITFEELKVGLKKVGAN), 470–505 (LQESEIYALMQAADVDNSGTIDYGEFIAATLHMNKI), 506–541 (EREDHLFAAFQYFDKDGSGYITADELQLACEEFGLG), and 544–575 (QLEEMIREVDEDNDGRIDYNEFVAMMQKPTMG). Ca(2+) contacts are provided by aspartate 447, aspartate 449, serine 451, glutamine 453, glutamate 458, aspartate 483, aspartate 485, serine 487, threonine 489, glutamate 494, aspartate 519, aspartate 521, serine 523, tyrosine 525, glutamate 530, aspartate 553, aspartate 555, aspartate 557, arginine 559, and glutamate 564.

It belongs to the protein kinase superfamily. Ser/Thr protein kinase family. CDPK subfamily. Expressed in roots.

It localises to the membrane. The catalysed reaction is L-seryl-[protein] + ATP = O-phospho-L-seryl-[protein] + ADP + H(+). It catalyses the reaction L-threonyl-[protein] + ATP = O-phospho-L-threonyl-[protein] + ADP + H(+). With respect to regulation, activated by calcium. Autophosphorylation may play an important role in the regulation of the kinase activity. May play a role in signal transduction pathways that involve calcium as a second messenger. The sequence is that of Calcium-dependent protein kinase 10 from Oryza sativa subsp. japonica (Rice).